A 159-amino-acid chain; its full sequence is Endoribonuclease YbeY (159 aa).

Residues His-125, His-129, and His-135 each coordinate Zn(2+).

It belongs to the endoribonuclease YbeY family. The cofactor is Zn(2+).

It localises to the cytoplasm. Single strand-specific metallo-endoribonuclease involved in late-stage 70S ribosome quality control and in maturation of the 3' terminus of the 16S rRNA. The protein is Endoribonuclease YbeY of Brevibacillus brevis (strain 47 / JCM 6285 / NBRC 100599).